A 426-amino-acid polypeptide reads, in one-letter code: Dihydroorotase (426 aa).

Residues His58 and His60 each contribute to the Zn(2+) site. Residues 60–62 (HLR) and Asn92 each bind substrate. Zn(2+) is bound by residues Asp150, His177, and His230. Asn276 is a substrate binding site. Asp303 serves as a coordination point for Zn(2+). The active site involves Asp303. Substrate contacts are provided by residues His307 and 321–322 (FG).

It belongs to the metallo-dependent hydrolases superfamily. DHOase family. Class I DHOase subfamily. The cofactor is Zn(2+).

The catalysed reaction is (S)-dihydroorotate + H2O = N-carbamoyl-L-aspartate + H(+). It functions in the pathway pyrimidine metabolism; UMP biosynthesis via de novo pathway; (S)-dihydroorotate from bicarbonate: step 3/3. Functionally, catalyzes the reversible cyclization of carbamoyl aspartate to dihydroorotate. The polypeptide is Dihydroorotase (Listeria monocytogenes serotype 4b (strain CLIP80459)).